A 342-amino-acid chain; its full sequence is Anthranilate phosphoribosyltransferase (342 aa).

Residues glycine 74, 77 to 78, threonine 82, 84 to 87, 101 to 109, and serine 113 contribute to the 5-phospho-alpha-D-ribose 1-diphosphate site; these read GD, NVST, and KHGNRSVSG. Glycine 74 is an anthranilate binding site. Mg(2+) is bound at residue serine 86. Asparagine 104 is an anthranilate binding site. An anthranilate-binding site is contributed by arginine 159. Mg(2+) is bound by residues aspartate 218 and glutamate 219.

Belongs to the anthranilate phosphoribosyltransferase family. As to quaternary structure, homodimer. The cofactor is Mg(2+).

The enzyme catalyses N-(5-phospho-beta-D-ribosyl)anthranilate + diphosphate = 5-phospho-alpha-D-ribose 1-diphosphate + anthranilate. The protein operates within amino-acid biosynthesis; L-tryptophan biosynthesis; L-tryptophan from chorismate: step 2/5. Its function is as follows. Catalyzes the transfer of the phosphoribosyl group of 5-phosphorylribose-1-pyrophosphate (PRPP) to anthranilate to yield N-(5'-phosphoribosyl)-anthranilate (PRA). This is Anthranilate phosphoribosyltransferase from Sulfolobus acidocaldarius (strain ATCC 33909 / DSM 639 / JCM 8929 / NBRC 15157 / NCIMB 11770).